A 638-amino-acid chain; its full sequence is Threonine--tRNA ligase (638 aa).

The 61-residue stretch at 1 to 61 folds into the TGS domain; the sequence is MPEITLPDGS…DNDSKVVIIT (61 aa). A catalytic region spans residues 242 to 533; sequence DHRKLGKKHS…LIEQYEAKFP (292 aa). Zn(2+)-binding residues include cysteine 333, histidine 384, and histidine 510.

Belongs to the class-II aminoacyl-tRNA synthetase family. As to quaternary structure, homodimer. Zn(2+) is required as a cofactor.

It localises to the cytoplasm. It catalyses the reaction tRNA(Thr) + L-threonine + ATP = L-threonyl-tRNA(Thr) + AMP + diphosphate + H(+). Functionally, catalyzes the attachment of threonine to tRNA(Thr) in a two-step reaction: L-threonine is first activated by ATP to form Thr-AMP and then transferred to the acceptor end of tRNA(Thr). Also edits incorrectly charged L-seryl-tRNA(Thr). In Prochlorococcus marinus subsp. pastoris (strain CCMP1986 / NIES-2087 / MED4), this protein is Threonine--tRNA ligase.